The following is a 273-amino-acid chain: Diphthine methyl ester synthase (273 aa).

Residues Leu10, Asp87, Gly90, Ser115 to Ile116, Leu166, Val224, and His249 contribute to the S-adenosyl-L-methionine site.

The protein belongs to the diphthine synthase family.

It carries out the reaction 2-[(3S)-amino-3-carboxypropyl]-L-histidyl-[translation elongation factor 2] + 4 S-adenosyl-L-methionine = diphthine methyl ester-[translation elongation factor 2] + 4 S-adenosyl-L-homocysteine + 3 H(+). The protein operates within protein modification; peptidyl-diphthamide biosynthesis. Functionally, S-adenosyl-L-methionine-dependent methyltransferase that catalyzes four methylations of the modified target histidine residue in translation elongation factor 2 (EF-2), to form an intermediate called diphthine methyl ester. The four successive methylation reactions represent the second step of diphthamide biosynthesis. This Dictyostelium discoideum (Social amoeba) protein is Diphthine methyl ester synthase (dph5).